The sequence spans 826 residues: Ribosome-releasing factor 2, mitochondrial (826 aa).

The transit peptide at Met-1–Tyr-44 directs the protein to the mitochondrion. Residues Pro-53–Leu-340 enclose the tr-type G domain. Residues Ala-62 to Thr-69, Asp-126 to His-130, and Asn-180 to Asp-183 each bind GTP.

The protein belongs to the TRAFAC class translation factor GTPase superfamily. Classic translation factor GTPase family. EF-G/EF-2 subfamily.

Its subcellular location is the mitochondrion. Functionally, mitochondrial GTPase that mediates the disassembly of ribosomes from messenger RNA at the termination of mitochondrial protein biosynthesis. Not involved in the GTP-dependent ribosomal translocation step during translation elongation. This is Ribosome-releasing factor 2, mitochondrial from Lodderomyces elongisporus (strain ATCC 11503 / CBS 2605 / JCM 1781 / NBRC 1676 / NRRL YB-4239) (Yeast).